The sequence spans 418 residues: Gamma-glutamyl phosphate reductase (418 aa).

This sequence belongs to the gamma-glutamyl phosphate reductase family.

The protein localises to the cytoplasm. The catalysed reaction is L-glutamate 5-semialdehyde + phosphate + NADP(+) = L-glutamyl 5-phosphate + NADPH + H(+). Its pathway is amino-acid biosynthesis; L-proline biosynthesis; L-glutamate 5-semialdehyde from L-glutamate: step 2/2. Functionally, catalyzes the NADPH-dependent reduction of L-glutamate 5-phosphate into L-glutamate 5-semialdehyde and phosphate. The product spontaneously undergoes cyclization to form 1-pyrroline-5-carboxylate. The chain is Gamma-glutamyl phosphate reductase from Desulfotalea psychrophila (strain LSv54 / DSM 12343).